The following is a 464-amino-acid chain: UNC93-like protein 3 (464 aa).

The next 11 helical transmembrane spans lie at 31-51 (VHIL…AQNL), 62-82 (ISLG…SLVV), 84-104 (LMGS…FVAA), 110-130 (WFTM…IWVG), 160-180 (EFWA…LALL), 192-212 (TLLM…MFFI), 251-271 (LLIV…WAEF), 275-295 (IVTP…YGAL), 313-333 (ITFI…WLLL), 341-361 (VLGT…DGIL), and 392-412 (IAIV…IVML).

It belongs to the unc-93 family.

The protein localises to the membrane. The protein is UNC93-like protein 3 of Arabidopsis thaliana (Mouse-ear cress).